A 336-amino-acid polypeptide reads, in one-letter code: D-aspartate oxidase (336 aa).

Positions 34, 35, 41, 42, 304, 308, and 309 each coordinate FAD. Residues 334–336 (SKL) carry the Microbody targeting signal motif.

The protein belongs to the DAMOX/DASOX family. In terms of assembly, monomer. FAD serves as cofactor.

It localises to the peroxisome matrix. The enzyme catalyses D-aspartate + O2 + H2O = oxaloacetate + H2O2 + NH4(+). It carries out the reaction D-glutamate + O2 + H2O = H2O2 + 2-oxoglutarate + NH4(+). In terms of biological role, selectively catalyzes the oxidative deamination of acidic amino acids. Suppresses the level of D-aspartate in the brain, an amino acid that can act as an agonist for glutamate receptors. Protects the organism from the toxicity of D-amino acids. May also function in the intestine. This is D-aspartate oxidase from Octopus vulgaris (Common octopus).